The sequence spans 417 residues: Serine--tRNA ligase (417 aa).

226–228 provides a ligand contact to L-serine; sequence TSE. ATP contacts are provided by residues 257-259 and Val273; that span reads RRE. Glu280 contributes to the L-serine binding site. 344–347 lines the ATP pocket; sequence ELTS. Thr379 contributes to the L-serine binding site.

Belongs to the class-II aminoacyl-tRNA synthetase family. Type-1 seryl-tRNA synthetase subfamily. As to quaternary structure, homodimer. The tRNA molecule binds across the dimer.

The protein localises to the cytoplasm. The enzyme catalyses tRNA(Ser) + L-serine + ATP = L-seryl-tRNA(Ser) + AMP + diphosphate + H(+). The catalysed reaction is tRNA(Sec) + L-serine + ATP = L-seryl-tRNA(Sec) + AMP + diphosphate + H(+). It functions in the pathway aminoacyl-tRNA biosynthesis; selenocysteinyl-tRNA(Sec) biosynthesis; L-seryl-tRNA(Sec) from L-serine and tRNA(Sec): step 1/1. In terms of biological role, catalyzes the attachment of serine to tRNA(Ser). Is also able to aminoacylate tRNA(Sec) with serine, to form the misacylated tRNA L-seryl-tRNA(Sec), which will be further converted into selenocysteinyl-tRNA(Sec). This Mycolicibacterium smegmatis (strain ATCC 700084 / mc(2)155) (Mycobacterium smegmatis) protein is Serine--tRNA ligase.